Reading from the N-terminus, the 288-residue chain is 4-diphosphocytidyl-2-C-methyl-D-erythritol kinase (288 aa).

K13 is an active-site residue. 96 to 106 (PIGGGIGGGSS) is an ATP binding site. The active site involves D138.

It belongs to the GHMP kinase family. IspE subfamily.

The catalysed reaction is 4-CDP-2-C-methyl-D-erythritol + ATP = 4-CDP-2-C-methyl-D-erythritol 2-phosphate + ADP + H(+). It functions in the pathway isoprenoid biosynthesis; isopentenyl diphosphate biosynthesis via DXP pathway; isopentenyl diphosphate from 1-deoxy-D-xylulose 5-phosphate: step 3/6. Functionally, catalyzes the phosphorylation of the position 2 hydroxy group of 4-diphosphocytidyl-2C-methyl-D-erythritol. The sequence is that of 4-diphosphocytidyl-2-C-methyl-D-erythritol kinase from Aliivibrio salmonicida (strain LFI1238) (Vibrio salmonicida (strain LFI1238)).